The following is a 498-amino-acid chain: Lysine--tRNA ligase (498 aa).

Residues Glu408 and Glu415 each contribute to the Mg(2+) site.

This sequence belongs to the class-II aminoacyl-tRNA synthetase family. In terms of assembly, homodimer. The cofactor is Mg(2+).

It is found in the cytoplasm. It carries out the reaction tRNA(Lys) + L-lysine + ATP = L-lysyl-tRNA(Lys) + AMP + diphosphate. The polypeptide is Lysine--tRNA ligase (Listeria innocua serovar 6a (strain ATCC BAA-680 / CLIP 11262)).